We begin with the raw amino-acid sequence, 617 residues long: Ceramide transfer protein (617 aa).

The span at 1 to 11 shows a compositional bias: polar residues; the sequence is MSDNQSWNSSG. Residues 1 to 23 are disordered; sequence MSDNQSWNSSGSEEDLETESGPP. The region spanning 23–117 is the PH domain; it reads PVERCGVLSK…WIDSIEQHKS (95 aa). The stretch at 268 to 302 forms a coiled coil; the sequence is REDSWQKRLDKEIEKRRRVEEAYKNAMTELKKKSH. The short motif at 320 to 326 is the FFAT element; the sequence is EFFDAVE. Over residues 332–344 the composition is skewed to basic and acidic residues; the sequence is QDKIEQSQSEKGR. The disordered stretch occupies residues 332 to 355; it reads QDKIEQSQSEKGRSHWPSSLPSTE. In terms of domain architecture, START spans 383 to 611; it reads DEHRFRIQVE…FTSYVQEKTA (229 aa). Residues E466, Q487, N524, and Y572 each contribute to the an N-acylsphing-4-enine site.

Its subcellular location is the cytoplasm. It is found in the golgi apparatus. The protein resides in the endoplasmic reticulum. It carries out the reaction N-hexadecanoylsphing-4-enine(in) = N-hexadecanoylsphing-4-enine(out). Functionally, may mediate the intracellular trafficking of ceramide in a non-vesicular manner. This Xenopus tropicalis (Western clawed frog) protein is Ceramide transfer protein (cert1).